A 126-amino-acid polypeptide reads, in one-letter code: UPF0738 protein BH2850 (126 aa).

The protein belongs to the UPF0738 family.

The sequence is that of UPF0738 protein BH2850 from Halalkalibacterium halodurans (strain ATCC BAA-125 / DSM 18197 / FERM 7344 / JCM 9153 / C-125) (Bacillus halodurans).